The primary structure comprises 170 residues: NADH-quinone oxidoreductase subunit B (170 aa).

[4Fe-4S] cluster contacts are provided by Cys42, Cys43, Cys107, and Cys136.

This sequence belongs to the complex I 20 kDa subunit family. As to quaternary structure, NDH-1 is composed of 14 different subunits. Subunits NuoB, C, D, E, F, and G constitute the peripheral sector of the complex. The cofactor is [4Fe-4S] cluster.

It localises to the cell inner membrane. The catalysed reaction is a quinone + NADH + 5 H(+)(in) = a quinol + NAD(+) + 4 H(+)(out). In terms of biological role, NDH-1 shuttles electrons from NADH, via FMN and iron-sulfur (Fe-S) centers, to quinones in the respiratory chain. The immediate electron acceptor for the enzyme in this species is believed to be ubiquinone. Couples the redox reaction to proton translocation (for every two electrons transferred, four hydrogen ions are translocated across the cytoplasmic membrane), and thus conserves the redox energy in a proton gradient. This Campylobacter curvus (strain 525.92) protein is NADH-quinone oxidoreductase subunit B.